The following is a 91-amino-acid chain: Late embryogenis abundant protein 2 (91 aa).

Residues K47 to T72 form a disordered region.

This sequence belongs to the LEA type 3 family.

The protein resides in the cytoplasm. It localises to the nucleus. This Arabidopsis thaliana (Mouse-ear cress) protein is Late embryogenis abundant protein 2.